A 262-amino-acid polypeptide reads, in one-letter code: Serine/arginine-rich SC35-like splicing factor SCL30 (262 aa).

The segment covering 1-14 has biased composition (low complexity); sequence MRRYSPPYYSPPRR. Disordered regions lie at residues 1 to 48 and 123 to 262; these read MRRY…SHGS and ASES…VSPR. Ser5, Ser10, and Ser22 each carry phosphoserine. Residues 31–42 show a composition bias toward gly residues; the sequence is GYGGGGGGGGRR. The 79-residue stretch at 47 to 125 folds into the RRM domain; sequence GSLLVRNIPL…REITVVVASE (79 aa). Residues 125-152 show a composition bias toward basic and acidic residues; sequence ESRKRPEEMRVKTRTRSREPSGSRDRSH. Positions 153–167 are enriched in basic residues; that stretch reads GRSRSRSISRSRSPR. Phosphoserine occurs at positions 182, 204, and 206. Tyr209 carries the phosphotyrosine modification. Basic and acidic residues predominate over residues 217-239; that stretch reads PDRDRNGDNEIREKPGYEAEDRR. The segment covering 243–262 has biased composition (low complexity); it reads RAVSRSPSGSRSRSVEVSPR. Residues Ser254, Ser256, and Ser260 each carry the phosphoserine modification.

Belongs to the splicing factor SR family. SCL subfamily. In terms of assembly, component of the spliceosome. Interacts with RS2Z33, CYP59, CYP63 and CYP95. Post-translationally, phosphorylated.

The protein resides in the nucleus speckle. Involved in intron recognition and spliceosome assembly. Probably active at the 5' splice sites. The sequence is that of Serine/arginine-rich SC35-like splicing factor SCL30 (SCL30) from Arabidopsis thaliana (Mouse-ear cress).